The primary structure comprises 110 residues: Large ribosomal subunit protein uL22 (110 aa).

Belongs to the universal ribosomal protein uL22 family. As to quaternary structure, part of the 50S ribosomal subunit.

Functionally, this protein binds specifically to 23S rRNA; its binding is stimulated by other ribosomal proteins, e.g. L4, L17, and L20. It is important during the early stages of 50S assembly. It makes multiple contacts with different domains of the 23S rRNA in the assembled 50S subunit and ribosome. Its function is as follows. The globular domain of the protein is located near the polypeptide exit tunnel on the outside of the subunit, while an extended beta-hairpin is found that lines the wall of the exit tunnel in the center of the 70S ribosome. The protein is Large ribosomal subunit protein uL22 of Acinetobacter baumannii (strain ACICU).